Here is an 88-residue protein sequence, read N- to C-terminus: Small ribosomal subunit protein bS20 (88 aa).

Disordered regions lie at residues 1–22 (MPNI…AQNA) and 69–88 (KNAA…GLSA).

The protein belongs to the bacterial ribosomal protein bS20 family.

Binds directly to 16S ribosomal RNA. This chain is Small ribosomal subunit protein bS20, found in Shouchella clausii (strain KSM-K16) (Alkalihalobacillus clausii).